We begin with the raw amino-acid sequence, 124 residues long: Small ribosomal subunit protein uS12c (124 aa).

Residues 1 to 28 (MPTFQQLVRSARKPHAKKTKSPALQGCP) form a disordered region. Over residues 10 to 20 (SARKPHAKKTK) the composition is skewed to basic residues.

The protein belongs to the universal ribosomal protein uS12 family. As to quaternary structure, part of the 30S ribosomal subunit.

Its subcellular location is the plastid. Functionally, with S4 and S5 plays an important role in translational accuracy. Located at the interface of the 30S and 50S subunits. In Prototheca wickerhamii, this protein is Small ribosomal subunit protein uS12c (rps12).